A 367-amino-acid polypeptide reads, in one-letter code: UDP-N-acetylglucosamine--N-acetylmuramyl-(pentapeptide) pyrophosphoryl-undecaprenol N-acetylglucosamine transferase (367 aa).

UDP-N-acetyl-alpha-D-glucosamine is bound by residues 11 to 13 (TAG), Asn-125, Arg-163, Ser-197, and Gln-289.

The protein belongs to the glycosyltransferase 28 family. MurG subfamily.

It is found in the cell membrane. It carries out the reaction di-trans,octa-cis-undecaprenyl diphospho-N-acetyl-alpha-D-muramoyl-L-alanyl-D-glutamyl-meso-2,6-diaminopimeloyl-D-alanyl-D-alanine + UDP-N-acetyl-alpha-D-glucosamine = di-trans,octa-cis-undecaprenyl diphospho-[N-acetyl-alpha-D-glucosaminyl-(1-&gt;4)]-N-acetyl-alpha-D-muramoyl-L-alanyl-D-glutamyl-meso-2,6-diaminopimeloyl-D-alanyl-D-alanine + UDP + H(+). The protein operates within cell wall biogenesis; peptidoglycan biosynthesis. Its function is as follows. Cell wall formation. Catalyzes the transfer of a GlcNAc subunit on undecaprenyl-pyrophosphoryl-MurNAc-pentapeptide (lipid intermediate I) to form undecaprenyl-pyrophosphoryl-MurNAc-(pentapeptide)GlcNAc (lipid intermediate II). This is UDP-N-acetylglucosamine--N-acetylmuramyl-(pentapeptide) pyrophosphoryl-undecaprenol N-acetylglucosamine transferase from Clavibacter michiganensis subsp. michiganensis (strain NCPPB 382).